The chain runs to 438 residues: 23S rRNA (uracil(1939)-C(5))-methyltransferase RlmD (438 aa).

Positions Lys10–Lys69 constitute a TRAM domain. Positions 82, 88, 91, and 169 each coordinate [4Fe-4S] cluster. Residues Gln272, Phe301, Asn306, Glu322, Asn349, and Asp370 each contribute to the S-adenosyl-L-methionine site. Cys396 functions as the Nucleophile in the catalytic mechanism.

It belongs to the class I-like SAM-binding methyltransferase superfamily. RNA M5U methyltransferase family. RlmD subfamily.

The catalysed reaction is uridine(1939) in 23S rRNA + S-adenosyl-L-methionine = 5-methyluridine(1939) in 23S rRNA + S-adenosyl-L-homocysteine + H(+). In terms of biological role, catalyzes the formation of 5-methyl-uridine at position 1939 (m5U1939) in 23S rRNA. This chain is 23S rRNA (uracil(1939)-C(5))-methyltransferase RlmD, found in Aliivibrio salmonicida (strain LFI1238) (Vibrio salmonicida (strain LFI1238)).